A 377-amino-acid chain; its full sequence is Bacterial actin-related protein (377 aa).

The protein belongs to the actin family.

Its function is as follows. May be a dominant-negative inhibitor of eukaryotic actin polymerization. This Haliangium ochraceum (strain DSM 14365 / JCM 11303 / SMP-2) protein is Bacterial actin-related protein (barP).